Consider the following 379-residue polypeptide: Putative acetyl-CoA C-acetyltransferase VraB (379 aa).

The Acyl-thioester intermediate role is filled by C86. Catalysis depends on H338, which acts as the Proton acceptor.

Belongs to the thiolase-like superfamily. Thiolase family.

This Staphylococcus aureus (strain COL) protein is Putative acetyl-CoA C-acetyltransferase VraB (vraB).